A 107-amino-acid chain; its full sequence is uncharacterized protein (107 aa).

A run of 2 helical transmembrane segments spans residues 11–31 and 58–78; these read CVNF…ILCI and LFFL…LAFQ.

The protein localises to the mitochondrion membrane. This is an uncharacterized protein from Saccharomyces cerevisiae (strain ATCC 204508 / S288c) (Baker's yeast).